A 467-amino-acid polypeptide reads, in one-letter code: ATP-dependent protease ATPase subunit ClpY (467 aa).

ATP-binding positions include valine 20, 62–67 (GVGKTE), aspartate 279, glutamate 345, and arginine 417.

Belongs to the ClpX chaperone family. HslU subfamily. As to quaternary structure, a double ring-shaped homohexamer of ClpQ is capped on each side by a ring-shaped ClpY homohexamer. The assembly of the ClpQ/ClpY complex is dependent on binding of ATP.

The protein localises to the cytoplasm. ATPase activity is much induced upon complex formation with ClpQ. Functionally, ATPase subunit of a proteasome-like degradation complex; this subunit has chaperone activity. This is ATP-dependent protease ATPase subunit ClpY (clpY) from Bacillus subtilis (strain 168).